A 258-amino-acid chain; its full sequence is Phycoerythrobilin:ferredoxin oxidoreductase (258 aa).

This sequence belongs to the HY2 family.

It carries out the reaction (3Z)-phycoerythrobilin + oxidized 2[4Fe-4S]-[ferredoxin] = 15,16-dihydrobiliverdin + reduced 2[4Fe-4S]-[ferredoxin] + 2 H(+). Catalyzes the two-electron reduction of the C2 and C3(1) diene system of 15,16-dihydrobiliverdin. This Prochlorococcus marinus (strain NATL2A) protein is Phycoerythrobilin:ferredoxin oxidoreductase.